Reading from the N-terminus, the 214-residue chain is Pyrrolidone-carboxylate peptidase (214 aa).

Catalysis depends on residues glutamate 78, cysteine 141, and histidine 165.

It belongs to the peptidase C15 family. Homotetramer.

The protein resides in the cytoplasm. The catalysed reaction is Release of an N-terminal pyroglutamyl group from a polypeptide, the second amino acid generally not being Pro.. Its function is as follows. Removes 5-oxoproline from various penultimate amino acid residues except L-proline. This is Pyrrolidone-carboxylate peptidase from Streptococcus pneumoniae serotype 2 (strain D39 / NCTC 7466).